Consider the following 55-residue polypeptide: UPF0391 membrane protein RSp1666 (55 aa).

Helical transmembrane passes span 5 to 25 and 33 to 53; these read AVIF…GIAA and ILFM…LVAG.

It belongs to the UPF0391 family.

The protein localises to the cell membrane. The protein is UPF0391 membrane protein RSp1666 of Ralstonia nicotianae (strain ATCC BAA-1114 / GMI1000) (Ralstonia solanacearum).